A 438-amino-acid chain; its full sequence is V-type ATP synthase beta chain (438 aa).

Belongs to the ATPase alpha/beta chains family.

Its function is as follows. Produces ATP from ADP in the presence of a proton gradient across the membrane. The V-type beta chain is a regulatory subunit. This Chlamydia abortus (strain DSM 27085 / S26/3) (Chlamydophila abortus) protein is V-type ATP synthase beta chain.